A 323-amino-acid polypeptide reads, in one-letter code: Methionyl-tRNA formyltransferase (323 aa).

113 to 116 (SLLP) lines the (6S)-5,6,7,8-tetrahydrofolate pocket.

Belongs to the Fmt family.

It carries out the reaction L-methionyl-tRNA(fMet) + (6R)-10-formyltetrahydrofolate = N-formyl-L-methionyl-tRNA(fMet) + (6S)-5,6,7,8-tetrahydrofolate + H(+). Functionally, attaches a formyl group to the free amino group of methionyl-tRNA(fMet). The formyl group appears to play a dual role in the initiator identity of N-formylmethionyl-tRNA by promoting its recognition by IF2 and preventing the misappropriation of this tRNA by the elongation apparatus. The chain is Methionyl-tRNA formyltransferase from Nitrosococcus oceani (strain ATCC 19707 / BCRC 17464 / JCM 30415 / NCIMB 11848 / C-107).